Consider the following 202-residue polypeptide: Snake venom metalloproteinase fibrolase (202 aa).

Residues arginine 6–proline 202 enclose the Peptidase M12B domain. Position 9 (glutamate 9) interacts with Ca(2+). Asparagine 25 carries N-linked (GlcNAc...) asparagine glycosylation. Aspartate 93 lines the Ca(2+) pocket. Intrachain disulfides connect cysteine 117–cysteine 197, cysteine 157–cysteine 181, and cysteine 159–cysteine 164. Position 142 (histidine 142) interacts with Zn(2+). Residue glutamate 143 is part of the active site. 2 residues coordinate Zn(2+): histidine 146 and histidine 152. Residues cysteine 197 and asparagine 200 each contribute to the Ca(2+) site.

This sequence belongs to the venom metalloproteinase (M12B) family. P-I subfamily. In terms of assembly, monomer. Zn(2+) is required as a cofactor. Post-translationally, glycosylated. As to expression, expressed by the venom gland.

It is found in the secreted. The enzyme catalyses Hydrolysis of 14-Ala-|-Leu-15 in insulin B chain and 413-Lys-|-Leu-414 in alpha-chain of fibrinogen.. With respect to regulation, activated by calcium and magnesium ions. Inhibited by EDTA, DTT and L-cysteine. Activity is not affected by PMSF or heparin. Functionally, has fibrino(geno)lytic activity on the alpha and beta chains of fibrinogen (FGA and FGB). Inhibits human ADP- and collagen-induced platelet aggregation on platelet-rich plasma but does not affect the thrombin-induced aggregation of rabbit washed platelets. Slightly degrades plasminogen. This is Snake venom metalloproteinase fibrolase from Macrovipera lebetinus (Levantine viper).